We begin with the raw amino-acid sequence, 64 residues long: Thrombin-like enzyme collinein-4 (64 aa).

Disulfide bonds link Cys5/Cys23 and Cys34/Cys51.

Monomer. As to expression, expressed by the vanom gland.

It is found in the secreted. Its function is as follows. Thrombin-like snake venom serine protease. The polypeptide is Thrombin-like enzyme collinein-4 (Crotalus durissus collilineatus (Brazilian rattlesnake)).